The primary structure comprises 257 residues: Glutamate racemase (257 aa).

Substrate contacts are provided by residues 12 to 13 and 44 to 45; these read DS and YG. Cysteine 75 (proton donor/acceptor) is an active-site residue. A substrate-binding site is contributed by 76–77; the sequence is NT. The active-site Proton donor/acceptor is cysteine 185. 186–187 provides a ligand contact to substrate; that stretch reads TH.

This sequence belongs to the aspartate/glutamate racemases family.

The catalysed reaction is L-glutamate = D-glutamate. The protein operates within cell wall biogenesis; peptidoglycan biosynthesis. Its function is as follows. Provides the (R)-glutamate required for cell wall biosynthesis. This Clostridium botulinum (strain 657 / Type Ba4) protein is Glutamate racemase.